Consider the following 366-residue polypeptide: Glutathione S-transferase omega-like 3 (366 aa).

Cysteine 46 is a catalytic residue. One can recognise a GST C-terminal domain in the interval proline 197–valine 349.

Belongs to the GST superfamily. Omega family.

It localises to the cytoplasm. It carries out the reaction RX + glutathione = an S-substituted glutathione + a halide anion + H(+). Functionally, active as '1-Cys' thiol transferase against beta-hydroxyethyl disulfide (HED), as dehydroascorbate reductase and as dimethylarsinic acid reductase, while not active against the standard GST substrate 1-chloro-2,4-dinitrobenzene (CDNB). In Saccharomyces cerevisiae (strain ATCC 204508 / S288c) (Baker's yeast), this protein is Glutathione S-transferase omega-like 3 (GTO3).